We begin with the raw amino-acid sequence, 79 residues long: Acyl carrier protein (79 aa).

Residues 6 to 79 form the Carrier domain; the sequence is KEILDGLAEI…VQDVINYIQK (74 aa). At Ser41 the chain carries O-(pantetheine 4'-phosphoryl)serine.

This sequence belongs to the acyl carrier protein (ACP) family. Post-translationally, 4'-phosphopantetheine is transferred from CoA to a specific serine of apo-ACP by AcpS. This modification is essential for activity because fatty acids are bound in thioester linkage to the sulfhydryl of the prosthetic group.

It localises to the cytoplasm. It functions in the pathway lipid metabolism; fatty acid biosynthesis. Carrier of the growing fatty acid chain in fatty acid biosynthesis. This Thermobifida fusca (strain YX) protein is Acyl carrier protein.